A 118-amino-acid chain; its full sequence is Ribonuclease P protein component (118 aa).

Belongs to the RnpA family. As to quaternary structure, consists of a catalytic RNA component (M1 or rnpB) and a protein subunit.

The enzyme catalyses Endonucleolytic cleavage of RNA, removing 5'-extranucleotides from tRNA precursor.. In terms of biological role, RNaseP catalyzes the removal of the 5'-leader sequence from pre-tRNA to produce the mature 5'-terminus. It can also cleave other RNA substrates such as 4.5S RNA. The protein component plays an auxiliary but essential role in vivo by binding to the 5'-leader sequence and broadening the substrate specificity of the ribozyme. This Ureaplasma urealyticum serovar 10 (strain ATCC 33699 / Western) protein is Ribonuclease P protein component.